The primary structure comprises 56 residues: Defensin-1 (56 aa).

Positions 1–24 are cleaved as a signal peptide; sequence MKAIVVLLILALILCLYAMTTVEG. Disulfide bonds link cysteine 26-cysteine 45, cysteine 31-cysteine 53, and cysteine 35-cysteine 55.

The protein resides in the secreted. Its function is as follows. Antibacterial protein involved in the immune response to septic injury. When combined with 14.026 kDa and 14.059 kDa hemolymph antimicrobial peptides, it has a strong cooperative activity against the Gram-positive bacteria B.subtilis and S.aureus, and against the Gram-negative bacteria E.coli DH5-alpha and K.pneumoniae ATCC 138833. Does not show detectable antibacterial activity when present alone. Has no hemolytic activity in human erythrocytes. In Centruroides limpidus (Mexican scorpion), this protein is Defensin-1.